The sequence spans 217 residues: 3,4-dihydroxy-2-butanone 4-phosphate synthase (217 aa).

Residues 37-38 (RE), aspartate 42, 150-154 (RRGHT), and glutamate 174 each bind D-ribulose 5-phosphate. Glutamate 38 serves as a coordination point for Mg(2+). Histidine 153 serves as a coordination point for Mg(2+).

Belongs to the DHBP synthase family. In terms of assembly, homodimer. It depends on Mg(2+) as a cofactor. Requires Mn(2+) as cofactor.

It carries out the reaction D-ribulose 5-phosphate = (2S)-2-hydroxy-3-oxobutyl phosphate + formate + H(+). It participates in cofactor biosynthesis; riboflavin biosynthesis; 2-hydroxy-3-oxobutyl phosphate from D-ribulose 5-phosphate: step 1/1. Catalyzes the conversion of D-ribulose 5-phosphate to formate and 3,4-dihydroxy-2-butanone 4-phosphate. In Yersinia enterocolitica serotype O:8 / biotype 1B (strain NCTC 13174 / 8081), this protein is 3,4-dihydroxy-2-butanone 4-phosphate synthase.